The primary structure comprises 1040 residues: DIS3-like exonuclease 1 (1040 aa).

The CSD1 domain maps to 232 to 310 (AGIKSGRYKQ…KGRTGALCEN (79 aa)). Residues 360–426 (VLVMPWDYRI…AEIATILVEN (67 aa)) enclose the CSD2 domain. The 350-residue stretch at 459 to 808 (RLDLRETHLV…VHRLLLAAVN (350 aa)) folds into the RNB domain.

The protein belongs to the RNR ribonuclease family. As to quaternary structure, component of the RNA exosome complex. The cofactor is Mg(2+).

The protein localises to the cytoplasm. It carries out the reaction Exonucleolytic cleavage in the 3'- to 5'-direction to yield nucleoside 5'-phosphates.. Catalytic component of the RNA exosome complex which has 3'-&gt;5' exoribonuclease activity and participates in a multitude of cellular RNA processing and degradation events. The sequence is that of DIS3-like exonuclease 1 (dis3l) from Xenopus laevis (African clawed frog).